A 206-amino-acid polypeptide reads, in one-letter code: Recombination protein RecR (206 aa).

The C4-type zinc finger occupies 58-73; it reads CENCHNISDVAVCEIC. In terms of domain architecture, Toprim spans 81 to 176; the sequence is QIVCVVEDVR…ITSSIARGIS (96 aa).

This sequence belongs to the RecR family.

May play a role in DNA repair. It seems to be involved in an RecBC-independent recombinational process of DNA repair. It may act with RecF and RecO. The protein is Recombination protein RecR of Flavobacterium psychrophilum (strain ATCC 49511 / DSM 21280 / CIP 103535 / JIP02/86).